The sequence spans 241 residues: ATP synthase subunit a (241 aa).

The next 5 membrane-spanning stretches (helical) occupy residues G30 to G50, F91 to W111, I128 to S148, L193 to L213, and G214 to G234.

This sequence belongs to the ATPase A chain family. As to quaternary structure, F-type ATPases have 2 components, CF(1) - the catalytic core - and CF(0) - the membrane proton channel. CF(1) has five subunits: alpha(3), beta(3), gamma(1), delta(1), epsilon(1). CF(0) has four main subunits: a, b, b' and c.

It localises to the cellular thylakoid membrane. In terms of biological role, key component of the proton channel; it plays a direct role in the translocation of protons across the membrane. The polypeptide is ATP synthase subunit a (Prochlorococcus marinus (strain MIT 9312)).